A 181-amino-acid polypeptide reads, in one-letter code: GTP cyclohydrolase 1 2 (181 aa).

It belongs to the GTP cyclohydrolase I family. In terms of assembly, homomer.

The enzyme catalyses GTP + H2O = 7,8-dihydroneopterin 3'-triphosphate + formate + H(+). It participates in cofactor biosynthesis; 7,8-dihydroneopterin triphosphate biosynthesis; 7,8-dihydroneopterin triphosphate from GTP: step 1/1. This Pseudomonas syringae pv. tomato (strain ATCC BAA-871 / DC3000) protein is GTP cyclohydrolase 1 2.